A 463-amino-acid polypeptide reads, in one-letter code: A-type ATP synthase subunit B (463 aa).

This sequence belongs to the ATPase alpha/beta chains family. In terms of assembly, has multiple subunits with at least A(3), B(3), C, D, E, F, H, I and proteolipid K(x).

Its subcellular location is the cell membrane. In terms of biological role, component of the A-type ATP synthase that produces ATP from ADP in the presence of a proton gradient across the membrane. The B chain is a regulatory subunit. In Desulfurococcus sp. (strain SY), this protein is A-type ATP synthase subunit B.